Here is a 400-residue protein sequence, read N- to C-terminus: 1-deoxy-D-xylulose 5-phosphate reductoisomerase (400 aa).

NADPH contacts are provided by T17, G18, S19, I20, and N131. Residue K132 coordinates 1-deoxy-D-xylulose 5-phosphate. E133 provides a ligand contact to NADPH. Residue D157 coordinates Mn(2+). Positions 158, 159, 188, and 211 each coordinate 1-deoxy-D-xylulose 5-phosphate. E159 contributes to the Mn(2+) binding site. G217 provides a ligand contact to NADPH. 1-deoxy-D-xylulose 5-phosphate contacts are provided by S224, N229, K230, and E233. E233 is a Mn(2+) binding site.

This sequence belongs to the DXR family. It depends on Mg(2+) as a cofactor. The cofactor is Mn(2+).

The enzyme catalyses 2-C-methyl-D-erythritol 4-phosphate + NADP(+) = 1-deoxy-D-xylulose 5-phosphate + NADPH + H(+). It functions in the pathway isoprenoid biosynthesis; isopentenyl diphosphate biosynthesis via DXP pathway; isopentenyl diphosphate from 1-deoxy-D-xylulose 5-phosphate: step 1/6. Its function is as follows. Catalyzes the NADPH-dependent rearrangement and reduction of 1-deoxy-D-xylulose-5-phosphate (DXP) to 2-C-methyl-D-erythritol 4-phosphate (MEP). The chain is 1-deoxy-D-xylulose 5-phosphate reductoisomerase from Pseudomonas putida (strain ATCC 47054 / DSM 6125 / CFBP 8728 / NCIMB 11950 / KT2440).